A 743-amino-acid chain; its full sequence is Dystrobrevin alpha (743 aa).

Residues 1–288 (MIEDSGKRGN…SHSNQHQMKE (288 aa)) are interaction with MAGEE1. A ZZ-type zinc finger spans residues 238-294 (FHPVECSYCHSESMMGFRYRCQQCHNYQLCQDCFWRGHAGGSHSNQHQMKEYTSWKS). Cysteine 243, cysteine 246, cysteine 258, cysteine 261, cysteine 267, cysteine 270, histidine 280, and histidine 284 together coordinate Zn(2+). The interval 400–450 (DRLADEHVLIGLYVNMLRNNPSCMLESSNRLDEEHRLIARYAARLAAESSS) is syntrophin-binding region. A coiled-coil region spans residues 461–556 (DISFTIDANK…EGLMKLLKTQ (96 aa)). Residues 556–575 (QGAGSPRSSPSHTISRPIPM) form a disordered region. Residues 557-569 (GAGSPRSSPSHTI) are compositionally biased toward polar residues. Serine 662 carries the phosphoserine modification.

Belongs to the dystrophin family. Dystrobrevin subfamily. Interacts with dystrophin, utrophin and the syntrophins SNTA1, SNTB1, SNTB2, SNTG1 and SNTG2. Interacts with MAGEE1. Binds dystrobrevin binding protein 1. Interacts with CTNNAL1. The interaction is required for correct localization of both CTNNAL1 and DTNA. As to quaternary structure, does not interact with dystrophin. Phosphorylation of DTN-1 on tyrosine kinase substrate domain present in the C-terminus. In terms of tissue distribution, highly expressed in brain, skeletal and cardiac muscles, and expressed at lower levels in lung, liver and pancreas. Isoform 2 is not expressed in cardiac muscle. Isoform 7 and isoform 8 are only expressed in muscle.

The protein localises to the cytoplasm. It is found in the synapse. It localises to the cell membrane. Functionally, may be involved in the formation and stability of synapses as well as being involved in the clustering of nicotinic acetylcholine receptors. In Homo sapiens (Human), this protein is Dystrobrevin alpha.